The following is a 225-amino-acid chain: Phosphoribosyltransferase domain-containing protein 1 (225 aa).

A2 is modified (N-acetylalanine). Mg(2+)-binding residues include E141 and D142. Residues 141-149, K173, 194-195, and D201 contribute to the GMP site; these read EDVVGTGRT and FV. D201 is a binding site for Mg(2+).

It belongs to the purine/pyrimidine phosphoribosyltransferase family. Homodimer.

Functionally, has low, barely detectable phosphoribosyltransferase activity (in vitro). Binds GMP, IMP and alpha-D-5-phosphoribosyl 1-pyrophosphate (PRPP). Is not expected to contribute to purine metabolism or GMP salvage. This is Phosphoribosyltransferase domain-containing protein 1 (PRTFDC1) from Homo sapiens (Human).